Consider the following 142-residue polypeptide: Large ribosomal subunit protein uL11 (142 aa).

Belongs to the universal ribosomal protein uL11 family. In terms of assembly, part of the ribosomal stalk of the 50S ribosomal subunit. Interacts with L10 and the large rRNA to form the base of the stalk. L10 forms an elongated spine to which L12 dimers bind in a sequential fashion forming a multimeric L10(L12)X complex. One or more lysine residues are methylated.

Forms part of the ribosomal stalk which helps the ribosome interact with GTP-bound translation factors. The sequence is that of Large ribosomal subunit protein uL11 from Mycobacteroides abscessus (strain ATCC 19977 / DSM 44196 / CCUG 20993 / CIP 104536 / JCM 13569 / NCTC 13031 / TMC 1543 / L948) (Mycobacterium abscessus).